Reading from the N-terminus, the 1219-residue chain is MTEEIKFSVLVSLFNWIQKSKTSSQKRSKFRKFLDTYCKPSDYFVAVRLIIPSLDRERGSYGLKESVLATCLIDALGISRDAPDAVRLLNWRKGGTAKAGANAGNFSLIAAEVLQRRQGMASGGLTIKELNDLLDRLASSENRAEKTLVLSTLIQKTNAQEMKWVIRIILKDLKLGMSEKSIFQEFHPDAEDLFNVTCDLKLVCEKLRDRHQRHKRQDIEVGKAVRPQLAMRIGDVNAAWKKLHGKDVVAECKFDGDRIQIHKNGTDIHYFSRNFLDHSEYAHAMSDLIVQNILVDKCILDGEMLVWDTSLNRFAEFGSNQEIAKAAREGLDSHKQLCYVAFDVLYVGDTSVIHQSLKERHELLKKVVKPLKGRLEVLVPEGGLNVHRPSGEPSWSIVVHAAADVERFFKETVENRDEGIVLKDLESKWEPGDRSGKWMKLKPEYIRAGADLDVLIIGGYYGSGRRGGEVAQFLVALADRAEANVYPRRFMSFCRVGTGLSDDELNTVVSKLKPYFRKNEHPKKAPPSFYQVTNHSKERPDVWIDSPEKSIILSITSDIRTIRSEVFVAPYSLRFPRIDKVRYDKPWHECLDVQAFVELVNSSNGTTQKQKESESTQDNPKVNKSSKRGEKKNVSLVPSQFIQTDVSDIKGKTSIFSNMIFYFVNVPRSHSLETFHKMVVENGGKFSMNLNNSVTHCIAAESSGIKYQAAKRQRDVIHFSWVLDCCSRNKMLPLLPKYFLHLTDASRTKLQDDIDEFSDSYYWDLDLEGLKQVLSNAKQSEDSKSIDYYKKKLCPEKRWSCLLSCCVYFYPYSQTLSTEEEALLGIMAKRLMLEVLMAGGKVSNNLAHASHLVVLAMAEEPLDFTLVSKSFSEMEKRLLLKKRLHVVSSHWLEESLQREEKLCEDVYTLRPKYMEESDTEESDKSEHDTTEVASQGSAQTKEPASSKIAITSSRGRSNTRAVKRGRSSTNSLQRVQRRRGKQPSKISGDETEESDASEEKVSTRLSDIAEETDSFGEAQRNSSRGKCAKRGKSRVGQTQRVQRSRRGKKAAKIGGDESDENDELDGNNNVSADAEEGNAAGRSVENEETREPDIAKYTESQQRDNTVAVEEALQDSRNAKTEMDMKEKLQIHEDPLQAMLMKMFPIPSQKTTETSNRTTGEYRKANVSGECESSEKRKLDAETDNTSVNAGAESDVVPPLVKKKKVSYRDVAGELLKDW.

11 residues coordinate ATP: glutamate 251, lysine 253, arginine 258, arginine 273, glutamate 303, phenylalanine 342, glutamate 418, lysine 423, arginine 434, lysine 440, and lysine 442. The active-site N6-AMP-lysine intermediate is the lysine 253. Glutamate 303 provides a ligand contact to Mg(2+). Glutamate 418 contributes to the Mg(2+) binding site. The tract at residues 604–632 (NGTTQKQKESESTQDNPKVNKSSKRGEKK) is disordered. BRCT domains follow at residues 651 to 739 (GKTS…PKYF) and 807 to 909 (VYFY…VYTL). 2 disordered regions span residues 914–1126 (MEES…MDMK) and 1146–1197 (IPSQ…SDVV). Residues 932 to 960 (VASQGSAQTKEPASSKIAITSSRGRSNTR) are compositionally biased toward polar residues. Positions 1042-1051 (QRSRRGKKAA) are enriched in basic residues. Positions 1056-1065 (DESDENDELD) are enriched in acidic residues. Basic and acidic residues-rich tracts occupy residues 1084–1096 (VENEETREPDIAK) and 1117–1126 (RNAKTEMDMK). Over residues 1148-1159 (SQKTTETSNRTT) the composition is skewed to polar residues.

Belongs to the ATP-dependent DNA ligase family. Interacts with XRCC4 via its tandem BRCT domains. Interacts with POLL. The cofactor is Mg(2+). As to expression, widely expressed, with higher levels in young flowers and roots.

It is found in the nucleus. It catalyses the reaction ATP + (deoxyribonucleotide)n-3'-hydroxyl + 5'-phospho-(deoxyribonucleotide)m = (deoxyribonucleotide)n+m + AMP + diphosphate.. Its function is as follows. DNA ligase involved in DNA non-homologous end joining (NHEJ); required for double-strand break (DSB) repair. May be involved for T-DNA integration even if not absolutely required. Seems to be dispensable under normal growth conditions. The polypeptide is DNA ligase 4 (LIG4) (Arabidopsis thaliana (Mouse-ear cress)).